A 93-amino-acid chain; its full sequence is MANNASAEKRILINERNRLQNRFYKSSVRTLTKLYLKDLEVYKISRNPSDKEKAKNRLSLVYSLIDKGSKRNVFHKNTAARKKSKLASQLKIA.

The protein belongs to the bacterial ribosomal protein bS20 family.

Its subcellular location is the plastid. The protein localises to the chloroplast. Its function is as follows. Binds directly to 16S ribosomal RNA. In Trieres chinensis (Marine centric diatom), this protein is Small ribosomal subunit protein bS20c.